Consider the following 664-residue polypeptide: Probable 3',5'-cyclic phosphodiesterase pde-1 (664 aa).

Disordered regions lie at residues 24-60 (TSSASEEHGDSDKKLLSVQLITPRDEEEQTSSRSIKI) and 113-142 (RNQKEKSNSDDNCQEKEPTSPSSSRKKSYD). 2 stretches are compositionally biased toward basic and acidic residues: residues 28 to 38 (SEEHGDSDKKL) and 114 to 130 (NQKEKSNSDDNCQEKEP). The 379-residue stretch at 256–634 (VQCPIPPEIA…AHWKERAAKE (379 aa)) folds into the PDEase domain. The Proton donor role is filled by His-333. A divalent metal cation is bound by residues His-337, His-373, Asp-374, and Asp-480. Disordered regions lie at residues 564–597 (DSLFPPSVDGGDDKSPSNALSPLPDLRNSSTSPS) and 630–664 (RAAKEEEERKIKEAAEAEAAAKQVEENKENGVTTN). Positions 630 to 644 (RAAKEEEERKIKEAA) are enriched in basic and acidic residues.

The protein belongs to the cyclic nucleotide phosphodiesterase family. Interacts with cmd-1 in the presence of Ca(2+). It depends on a divalent metal cation as a cofactor. Expressed in AFD thermosensory neurons.

It catalyses the reaction a nucleoside 3',5'-cyclic phosphate + H2O = a nucleoside 5'-phosphate + H(+). Its function is as follows. Redundantly with pde-5, plays a role in the AFD thermosensory neurons to regulate microvilli receptive ending morphology, possibly by regulating cGMP levels. This Caenorhabditis elegans protein is Probable 3',5'-cyclic phosphodiesterase pde-1 (pde-1).